Reading from the N-terminus, the 458-residue chain is Argininosuccinate lyase (458 aa).

It belongs to the lyase 1 family. Argininosuccinate lyase subfamily.

Its subcellular location is the cytoplasm. The enzyme catalyses 2-(N(omega)-L-arginino)succinate = fumarate + L-arginine. It participates in amino-acid biosynthesis; L-arginine biosynthesis; L-arginine from L-ornithine and carbamoyl phosphate: step 3/3. In Geotalea daltonii (strain DSM 22248 / JCM 15807 / FRC-32) (Geobacter daltonii), this protein is Argininosuccinate lyase.